The primary structure comprises 2524 residues: Neurogenic locus notch homolog protein 1 (2524 aa).

The signal sequence occupies residues 1–19 (MDRIGLAVLLCSLPVLTQG). EGF-like domains lie at 20-57 (LRCTQTAEMCLNGGRCEMTPGGTGVCLCGNLYFGERCQ), 58-99 (FPNP…KVCL), 102-140 (VDNACVNNPCRNGGTCELLNSVTEYKCRCPPGWTGDSCQ), and 141-177 (QADPCASNPCANGGKCLPFEIQYICKCPPGFHGATCK). Residues 20–1729 (LRCTQTAEMC…METPKPSTLY (1710 aa)) lie on the Extracellular side of the membrane. Intrachain disulfides connect Cys22/Cys35, Cys29/Cys45, Cys47/Cys56, Cys62/Cys74, Cys68/Cys87, Cys89/Cys98, Cys106/Cys117, Cys111/Cys128, Cys130/Cys139, Cys145/Cys156, Cys150/Cys165, Cys167/Cys176, Cys183/Cys194, Cys188/Cys203, Cys205/Cys214, Cys221/Cys232, Cys226/Cys242, Cys244/Cys253, Cys260/Cys271, Cys265/Cys280, Cys282/Cys291, Cys298/Cys311, Cys305/Cys320, Cys322/Cys331, Cys338/Cys349, Cys343/Cys358, Cys360/Cys369, Cys375/Cys386, Cys380/Cys397, Cys399/Cys408, Cys415/Cys428, Cys422/Cys437, and Cys439/Cys448. Residues 179–215 (DINECSQNPCKNGGQCINEFGSYRCTCQNRFTGRNCD) form the EGF-like 5; calcium-binding domain. In terms of domain architecture, EGF-like 6 spans 217–254 (PYVPCNPSPCLNGGTCRQTDDTSYDCTCLPGFSGQNCE). The O-linked (Fuc...) threonine; alternate glycan is linked to Thr231. O-linked (GalNAc...) threonine; alternate glycosylation is present at Thr231. An EGF-like 7; calcium-binding domain is found at 256 to 292 (NIDDCPSNNCRNGGTCVDGVNTYNCQCPPDWTGQYCT). Residues 294–332 (DVDECQLMPNACQNGGTCHNTYGGYNCVCVNGWTGEDCS) form the EGF-like 8; calcium-binding domain. An EGF-like 9; calcium-binding domain is found at 334 to 370 (NIDDCANAACHSGATCHDRVASFYCECPHGRTGLLCH). One can recognise an EGF-like 10 domain in the interval 371 to 409 (LDNACISNPCNEGSNCDTNPVNGKAICTCPPGYTGPACN). Residues 411-449 (DVDECSLGANPCEHGGRCTNTLGSFQCNCPQGYAGPRCE) form the EGF-like 11; calcium-binding domain. Ca(2+) is bound by residues Thr431 and Ser434. Ser434 is a glycosylation site (O-linked (Glc...) serine). Positions 451, 452, and 454 each coordinate Ca(2+). One can recognise an EGF-like 12; calcium-binding domain in the interval 451–487 (DVNECLSNPCQNDSTCLDQIGEFQCICMPGYEGLYCE). Intrachain disulfides connect Cys455-Cys466, Cys460-Cys475, and Cys477-Cys486. Ser457 carries O-linked (Glc...) serine glycosylation. Asn462 carries an N-linked (GlcNAc...) asparagine glycan. The O-linked (Fuc...) threonine glycan is linked to Thr465. Ca(2+) is bound by residues Asp468 and Gln469. Asn489, Ile490, and Glu492 together coordinate Ca(2+). The region spanning 489-525 (NIDECASNPCLHNGKCIDKINEFRCDCPTGFSGNLCQ) is the EGF-like 13; calcium-binding domain. Intrachain disulfides connect Cys493-Cys504, Cys498-Cys513, Cys515-Cys524, Cys531-Cys542, Cys536-Cys551, Cys553-Cys562, Cys569-Cys579, Cys574-Cys588, Cys590-Cys599, Cys606-Cys617, Cys611-Cys626, Cys628-Cys637, Cys644-Cys654, Cys649-Cys663, Cys665-Cys674, Cys681-Cys692, Cys686-Cys701, Cys703-Cys712, Cys719-Cys729, Cys724-Cys738, Cys740-Cys749, Cys756-Cys767, Cys761-Cys776, Cys778-Cys787, Cys794-Cys805, Cys799-Cys814, Cys816-Cys825, Cys832-Cys843, Cys837-Cys854, Cys856-Cys865, Cys872-Cys883, Cys877-Cys892, Cys894-Cys903, Cys910-Cys921, Cys915-Cys930, Cys932-Cys941, Cys948-Cys959, Cys953-Cys968, Cys970-Cys979, Cys986-Cys997, Cys991-Cys1006, Cys1008-Cys1017, Cys1024-Cys1035, Cys1029-Cys1044, Cys1046-Cys1055, Cys1062-Cys1073, Cys1067-Cys1082, Cys1084-Cys1093, Cys1100-Cys1121, Cys1115-Cys1130, Cys1132-Cys1141, Cys1148-Cys1159, Cys1153-Cys1168, Cys1170-Cys1179, Cys1186-Cys1197, Cys1191-Cys1206, Cys1208-Cys1217, Cys1224-Cys1243, Cys1237-Cys1252, Cys1254-Cys1263, Cys1270-Cys1283, Cys1275-Cys1292, Cys1294-Cys1303, Cys1310-Cys1321, Cys1315-Cys1333, Cys1335-Cys1344, Cys1351-Cys1362, Cys1356-Cys1371, Cys1373-Cys1382, Cys1390-Cys1401, Cys1395-Cys1412, Cys1414-Cys1423, Cys1447-Cys1470, Cys1452-Cys1465, and Cys1461-Cys1477. An O-linked (Glc...) serine glycan is attached at Ser495. Ca(2+) is bound by residues Asp506 and Lys507. Positions 527 to 563 (DFDECTSTPCKNGAKCLDGPNSYTCQCTEGFTGRHCE) constitute an EGF-like 14; calcium-binding domain. In terms of domain architecture, EGF-like 15; calcium-binding spans 565 to 600 (DINECIPDPCHYGTCKDGIATFTCLCRPGYTGRLCD). Residues 602–638 (DINECLSKPCLNGGQCTDRENGYICTCPKGTTGVNCE) form the EGF-like 16; calcium-binding domain. One can recognise an EGF-like 17 domain in the interval 640 to 675 (KIDDCASNLCDNGKCIDKIDGYECTCEPGYTGKLCN). One can recognise an EGF-like 18; calcium-binding domain in the interval 677–713 (NINECDSNPCRNGGTCKDQINGFTCVCPDGYHDHMCL). Residues 715–750 (EVNECNSNPCIHGACHDGVNGYKCDCEAGWSGSNCD) enclose the EGF-like 19; calcium-binding domain. The 37-residue stretch at 752-788 (NNNECESNPCMNGGTCKDMTGAYICTCKAGFSGPNCQ) folds into the EGF-like 20; calcium-binding domain. In terms of domain architecture, EGF-like 21; calcium-binding spans 790-826 (NINECSSNPCLNHGTCIDDVAGYKCNCMLPYTGAICE). An EGF-like 22 domain is found at 828 to 866 (VLAPCAGSPCKNGGRCKESEDFETFSCECPPGWQGQTCE). An EGF-like 23; calcium-binding domain is found at 868–904 (DMNECVNRPCRNGATCQNTNGSYKCNCKPGYTGRNCE). Asn887 carries an N-linked (GlcNAc...) asparagine glycan. One can recognise an EGF-like 24; calcium-binding domain in the interval 906 to 942 (DIDDCQPNPCHNGGSCSDGINMFFCNCPAGFRGPKCE). Positions 944–980 (DINECASNPCKNGANCTDCVNSYTCTCQPGFSGIHCE) constitute an EGF-like 25; calcium-binding domain. Residue Asn958 is glycosylated (N-linked (GlcNAc...) asparagine). The region spanning 982-1018 (NTPDCTESSCFNGGTCIDGINTFTCQCPPGFTGSYCQ) is the EGF-like 26 domain. The region spanning 1020–1056 (DINECDSKPCLNGGTCQDSYGTYKCTCPQGYTGLNCQ) is the EGF-like 27; calcium-binding domain. EGF-like domains lie at 1058 to 1094 (LVRWCDSSPCKNGGKCWQTNNFYRCECKSGWTGVYCD) and 1096 to 1142 (PSVS…SYCE). The 37-residue stretch at 1144–1180 (QVDECSPNPCQNGATCTDYLGGYSCECVAGYHGVNCS) folds into the EGF-like 30; calcium-binding domain. The N-linked (GlcNAc...) asparagine glycan is linked to Asn1178. Residues 1182–1218 (EINECLSHPCQNGGTCIDLINTYKCSCPRGTQGVHCE) enclose the EGF-like 31; calcium-binding domain. The EGF-like 32; calcium-binding domain occupies 1220–1264 (NVDDCTPFYDSFTLEPKCFNNGKCIDRVGGYNCICPPGFVGERCE). EGF-like domains are found at residues 1266–1304 (DVNECLSNPCDSRGTQNCIQLVNDYRCECRQGFTGRRCE), 1306–1346 (VVDG…TCEY), 1347–1383 (DSRTCSNLRCQNGGTCISVLTSSKCVCSEGYTGATCQ), and 1386–1424 (VISPCASHPCYNGGTCQFFAEEPFFQCFCPKNFNGLFCH). The O-linked (Fuc...) threonine; alternate glycan is linked to Thr1400. The O-linked (GalNAc...) threonine; alternate glycan is linked to Thr1400. LNR repeat units follow at residues 1447–1487 (CENE…PWKN), 1488–1529 (CTQS…CNPL), and 1530–1564 (YDQYCKDHFQDGHCDQGCNNAECEWDGLDCANMPE). The N-linked (GlcNAc...) asparagine glycan is linked to Asn1487. Cystine bridges form between Cys1488–Cys1512, Cys1494–Cys1507, Cys1503–Cys1519, Cys1534–Cys1547, and Cys1543–Cys1559. Asn1508 is a glycosylation site (N-linked (GlcNAc...) asparagine). The N-linked (GlcNAc...) asparagine glycan is linked to Asn1584. Residues 1730–1750 (PMLSMLVIPLLIIFVFMMVIV) form a helical membrane-spanning segment. At 1751-2524 (NKKRRREHGQ…QRTHIPEAFK (774 aa)) the chain is on the cytoplasmic side. ANK repeat units follow at residues 1876–1919 (DGFT…QLHN), 1924–1953 (TGETALHLAARYARADAAKRLLESSADANV), 1957–1987 (MGRTPLHAAVAADAQGVFQILIRNRATDLDA), 1991–2020 (DGTTPLILAARLAVEGMVEELINAHADVNA), 2024–2053 (FGKSALHWAAAVNNVDAAAVLLKNSANKDM), and 2057–2086 (KEETSLFLAAREGSYETAKVLLDHYANRDI). Disordered regions lie at residues 2144–2230 (NMKP…LNHL), 2369–2407 (MQAQQMQQQQNLQLHQSMQQQHHNSSTTSTHINSPFCSS), and 2451–2524 (LTPP…EAFK). Composition is skewed to polar residues over residues 2180-2192 (GKTTLLDSGSSGV) and 2208-2230 (DVSSPPLMTSPFQQSPSMPLNHL). Residues 2369 to 2394 (MQAQQMQQQQNLQLHQSMQQQHHNSS) show a composition bias toward low complexity. Composition is skewed to polar residues over residues 2395–2407 (TTSTHINSPFCSS) and 2451–2471 (LTPPSQHSYSSPMDNTPSHQL). Low complexity predominate over residues 2481-2496 (PSPESPDQWSSSSPHS). The segment covering 2497-2516 (NMSDWSEGISSPPTSMQPQR) has biased composition (polar residues).

It belongs to the NOTCH family. As to quaternary structure, forms a ternary complex with nrarp and rbpj/suh. Post-translationally, O-glycosylated on the EGF-like domains. Contains both O-linked fucose and O-linked glucose. O-linked glycosylation by galnt11 is involved in determination of left/right symmetry: glycosylation promotes activation of notch1, possibly by promoting cleavage by adam17, modulating the balance between motile and immotile (sensory) cilia at the left-right organiser (LRO). Synthesized in the endoplasmic reticulum as an inactive form which is proteolytically cleaved by a furin-like convertase in the trans-Golgi network before it reaches the plasma membrane to yield an active, ligand-accessible form. Cleavage results in a C-terminal fragment N(TM) and a N-terminal fragment N(EC). Following ligand binding, it is cleaved by adam17 to yield a membrane-associated intermediate fragment called notch extracellular truncation (NEXT). Following endocytosis, this fragment is then cleaved by presenilin dependent gamma-secretase to release a Notch-derived peptide containing the intracellular domain (NICD) from the membrane.

The protein localises to the cell membrane. Its subcellular location is the nucleus. Functions as a receptor for membrane-bound ligands Jagged-1 (JAG1), Jagged-2 (JAG2) and Delta-1 (DLL1) to regulate cell-fate determination. Upon ligand activation through the released notch intracellular domain (NICD) it forms a transcriptional activator complex with RBPJ/RBPSUH and activates genes of the enhancer of split locus. Affects the implementation of differentiation, proliferation and apoptotic programs. Involved in angiogenesis; negatively regulates endothelial cell proliferation and migration and angiogenic sprouting. Involved in the maturation of both CD4(+) and CD8(+) cells in the thymus. Important for follicular differentiation and possibly cell fate selection within the follicle. During cerebellar development, functions as a receptor for neuronal DNER and is involved in the differentiation of Bergmann glia. Represses neuronal and myogenic differentiation. May play an essential role in postimplantation development, probably in some aspect of cell specification and/or differentiation. May be involved in mesoderm development, somite formation and neurogenesis. Involved in determination of left/right symmetry by modulating the balance between motile and immotile (sensory) cilia at the left-right organiser (LRO). This is Neurogenic locus notch homolog protein 1 (notch1) from Xenopus laevis (African clawed frog).